A 121-amino-acid chain; its full sequence is Large ribosomal subunit protein uL22 (121 aa).

It belongs to the universal ribosomal protein uL22 family. Part of the 50S ribosomal subunit.

In terms of biological role, this protein binds specifically to 23S rRNA; its binding is stimulated by other ribosomal proteins, e.g. L4, L17, and L20. It is important during the early stages of 50S assembly. It makes multiple contacts with different domains of the 23S rRNA in the assembled 50S subunit and ribosome. Functionally, the globular domain of the protein is located near the polypeptide exit tunnel on the outside of the subunit, while an extended beta-hairpin is found that lines the wall of the exit tunnel in the center of the 70S ribosome. The chain is Large ribosomal subunit protein uL22 from Synechococcus sp. (strain WH7803).